Consider the following 259-residue polypeptide: Ribonuclease PH (259 aa).

Phosphate-binding positions include arginine 88 and 126 to 128 (GTR).

Belongs to the RNase PH family. As to quaternary structure, homohexameric ring arranged as a trimer of dimers.

It catalyses the reaction tRNA(n+1) + phosphate = tRNA(n) + a ribonucleoside 5'-diphosphate. Phosphorolytic 3'-5' exoribonuclease that plays an important role in tRNA 3'-end maturation. Removes nucleotide residues following the 3'-CCA terminus of tRNAs; can also add nucleotides to the ends of RNA molecules by using nucleoside diphosphates as substrates, but this may not be physiologically important. Probably plays a role in initiation of 16S rRNA degradation (leading to ribosome degradation) during starvation. The protein is Ribonuclease PH of Mycobacterium bovis (strain BCG / Pasteur 1173P2).